The primary structure comprises 837 residues: MGELFRSEEMTLAQLFLQSEAAYCCVSELGELGKVQFRDLNPDVNVFQRKFVNEVRRCEEMDRKLRFVEKEVKKANISILDTGENPEVPFPRDMIDLEANFEKIEIELKEINTNQEALKRNFLELTELKFILRKTQQFFDEMADPDLLEESSSLLEPSEMGRGAPLRLGFVAGVINRERIPTFERMLWRVCRGNVFLRQAEIENPLEDPVTGDSVHKSVFIIFFQGDQLKNRVKKICEGFRASLYPCPETPQERKEMATGVNTRIEDLQMVLNQTEDHRQRVLQAAAKSLRVWFIKVRKMKAIYHTLNLCNIDVTQKCLIAEVWCPVADLDSIQFALRRGTEHSGSTVPSILNRMQTNQTPPTYNKTNKFTYGFQNLVDAYGIGSYREINPAPYTIITFPFLFAVMFGDFGHGILMTLFAVWMVVRESRILSQKIDNELFTMMFSGRYIILLMGLFSIYTGLIYNDCFSKALNLFGSSWSVRPMFTDTWSEDLLKHTSVLQLNPNVTGVFNGPYPFGIDPIWSLATNKLTFLNSFKMKMSVVLGIIHMTFGVALSLLNHIYFKKPLNIYLGFIPEMIFMTTLFGYLVILIIYKWCAYDASTSMVAPSLLIHFINMFLFSYQDTSLPMLYKGQMGLQCFLVVCAIICVPWMLVVKPLILRRQYLRRKHLGTHNFGGIRVGNGPTEEDAEIIQHDQLSMHSEEGEEPAMEEVFDFGDTVVHQAIHTIEYCLGCISNTASYLRLWALSLAHAQLSEVLWTMVMHVGLSIRSLGGGIALVFVFSAFATLTIAILLIMEGLSAFLHALRLHWVEFQNKFYMGTGFKFLPFSFENIREGKFDE.

Residues 1–388 (MGELFRSEEM…DAYGIGSYRE (388 aa)) lie on the Cytoplasmic side of the membrane. A helical membrane pass occupies residues 389-407 (INPAPYTIITFPFLFAVMF). The Vacuolar portion of the chain corresponds to 408 to 409 (GD). A helical transmembrane segment spans residues 410–426 (FGHGILMTLFAVWMVVR). Over 427 to 441 (ESRILSQKIDNELFT) the chain is Cytoplasmic. Residues 442–471 (MMFSGRYIILLMGLFSIYTGLIYNDCFSKA) traverse the membrane as a helical segment. Over 472 to 534 (LNLFGSSWSV…ATNKLTFLNS (63 aa)) the chain is Vacuolar. A helical membrane pass occupies residues 535–554 (FKMKMSVVLGIIHMTFGVAL). At 555-572 (SLLNHIYFKKPLNIYLGF) the chain is on the cytoplasmic side. Residues 573-593 (IPEMIFMTTLFGYLVILIIYK) form a helical membrane-spanning segment. The Vacuolar portion of the chain corresponds to 594–638 (WCAYDASTSMVAPSLLIHFINMFLFSYQDTSLPMLYKGQMGLQCF). The chain crosses the membrane as a helical span at residues 639-658 (LVVCAIICVPWMLVVKPLIL). Over 659 to 724 (RRQYLRRKHL…DTVVHQAIHT (66 aa)) the chain is Cytoplasmic. The helical transmembrane segment at 725-749 (IEYCLGCISNTASYLRLWALSLAHA) threads the bilayer. The Vacuolar segment spans residues 750–770 (QLSEVLWTMVMHVGLSIRSLG). A helical transmembrane segment spans residues 771 to 809 (GGIALVFVFSAFATLTIAILLIMEGLSAFLHALRLHWVE). Residues 810 to 837 (FQNKFYMGTGFKFLPFSFENIREGKFDE) are Cytoplasmic-facing.

Belongs to the V-ATPase 116 kDa subunit family. As to quaternary structure, V-ATPase is a heteromultimeric enzyme made up of two complexes: the ATP-hydrolytic V1 complex and the proton translocation V0 complex. The V1 complex consists of three catalytic AB heterodimers that form a heterohexamer, three peripheral stalks each consisting of EG heterodimers, one central rotor including subunits D and F, and the regulatory subunits C and H. The proton translocation complex V0 consists of the proton transport subunit a, a ring of proteolipid subunits c9c'', rotary subunit d, subunits e and f, and two accessory subunits.

It localises to the cytoplasmic vesicle. It is found in the clathrin-coated vesicle membrane. The protein localises to the secretory vesicle. The protein resides in the synaptic vesicle membrane. Its subcellular location is the melanosome. In terms of biological role, subunit of the V0 complex of vacuolar(H+)-ATPase (V-ATPase), a multisubunit enzyme composed of a peripheral complex (V1) that hydrolyzes ATP and a membrane integral complex (V0) that translocates protons. V-ATPase is responsible for acidifying and maintaining the pH of intracellular compartments and in some cell types, is targeted to the plasma membrane, where it is responsible for acidifying the extracellular environment. Required for assembly and activity of the vacuolar ATPase. This Xenopus tropicalis (Western clawed frog) protein is V-type proton ATPase 116 kDa subunit a 1 (atp6v0a1).